Consider the following 259-residue polypeptide: Ribonuclease PH (259 aa).

Residues arginine 88 and glycine 126–arginine 128 each bind phosphate.

The protein belongs to the RNase PH family. As to quaternary structure, homohexameric ring arranged as a trimer of dimers.

It carries out the reaction tRNA(n+1) + phosphate = tRNA(n) + a ribonucleoside 5'-diphosphate. Its function is as follows. Phosphorolytic 3'-5' exoribonuclease that plays an important role in tRNA 3'-end maturation. Removes nucleotide residues following the 3'-CCA terminus of tRNAs; can also add nucleotides to the ends of RNA molecules by using nucleoside diphosphates as substrates, but this may not be physiologically important. Probably plays a role in initiation of 16S rRNA degradation (leading to ribosome degradation) during starvation. This is Ribonuclease PH from Mycolicibacterium smegmatis (strain ATCC 700084 / mc(2)155) (Mycobacterium smegmatis).